The following is a 402-amino-acid chain: 4-hydroxy-3-methylbut-2-enyl diphosphate reductase (402 aa).

Cysteine 66 is a binding site for [4Fe-4S] cluster. Histidine 96 serves as a coordination point for (2E)-4-hydroxy-3-methylbut-2-enyl diphosphate. Dimethylallyl diphosphate is bound at residue histidine 96. Residue histidine 96 participates in isopentenyl diphosphate binding. Cysteine 157 contacts [4Fe-4S] cluster. Histidine 185 serves as a coordination point for (2E)-4-hydroxy-3-methylbut-2-enyl diphosphate. Histidine 185 contacts dimethylallyl diphosphate. Histidine 185 lines the isopentenyl diphosphate pocket. Glutamate 187 (proton donor) is an active-site residue. Residue threonine 250 coordinates (2E)-4-hydroxy-3-methylbut-2-enyl diphosphate. Cysteine 288 is a [4Fe-4S] cluster binding site. The (2E)-4-hydroxy-3-methylbut-2-enyl diphosphate site is built by serine 317, serine 318, asparagine 319, and serine 379. The dimethylallyl diphosphate site is built by serine 317, serine 318, asparagine 319, and serine 379. Residues serine 317, serine 318, asparagine 319, and serine 379 each contribute to the isopentenyl diphosphate site.

Belongs to the IspH family. [4Fe-4S] cluster serves as cofactor.

It carries out the reaction isopentenyl diphosphate + 2 oxidized [2Fe-2S]-[ferredoxin] + H2O = (2E)-4-hydroxy-3-methylbut-2-enyl diphosphate + 2 reduced [2Fe-2S]-[ferredoxin] + 2 H(+). It catalyses the reaction dimethylallyl diphosphate + 2 oxidized [2Fe-2S]-[ferredoxin] + H2O = (2E)-4-hydroxy-3-methylbut-2-enyl diphosphate + 2 reduced [2Fe-2S]-[ferredoxin] + 2 H(+). It participates in isoprenoid biosynthesis; dimethylallyl diphosphate biosynthesis; dimethylallyl diphosphate from (2E)-4-hydroxy-3-methylbutenyl diphosphate: step 1/1. The protein operates within isoprenoid biosynthesis; isopentenyl diphosphate biosynthesis via DXP pathway; isopentenyl diphosphate from 1-deoxy-D-xylulose 5-phosphate: step 6/6. In terms of biological role, catalyzes the conversion of 1-hydroxy-2-methyl-2-(E)-butenyl 4-diphosphate (HMBPP) into a mixture of isopentenyl diphosphate (IPP) and dimethylallyl diphosphate (DMAPP). Acts in the terminal step of the DOXP/MEP pathway for isoprenoid precursor biosynthesis. The chain is 4-hydroxy-3-methylbut-2-enyl diphosphate reductase from Crocosphaera subtropica (strain ATCC 51142 / BH68) (Cyanothece sp. (strain ATCC 51142)).